The chain runs to 123 residues: Ribonuclease P protein component 2 (123 aa).

This sequence belongs to the eukaryotic/archaeal RNase P protein component 2 family. As to quaternary structure, consists of a catalytic RNA component and at least 4-5 protein subunits.

Its subcellular location is the cytoplasm. It catalyses the reaction Endonucleolytic cleavage of RNA, removing 5'-extranucleotides from tRNA precursor.. Part of ribonuclease P, a protein complex that generates mature tRNA molecules by cleaving their 5'-ends. The chain is Ribonuclease P protein component 2 from Sulfurisphaera tokodaii (strain DSM 16993 / JCM 10545 / NBRC 100140 / 7) (Sulfolobus tokodaii).